Consider the following 138-residue polypeptide: Superoxide dismutase [Mn] (138 aa).

Residues His-1, His-49, Asp-133, and His-137 each contribute to the Mn(2+) site.

The protein belongs to the iron/manganese superoxide dismutase family. Mn(2+) is required as a cofactor.

It catalyses the reaction 2 superoxide + 2 H(+) = H2O2 + O2. Functionally, destroys superoxide anion radicals which are normally produced within the cells and which are toxic to biological systems. The sequence is that of Superoxide dismutase [Mn] (sodA) from Mycobacterium celatum.